Consider the following 619-residue polypeptide: 1-deoxy-D-xylulose-5-phosphate synthase (619 aa).

Thiamine diphosphate-binding positions include His-74 and 115–117; that span reads GHS. Position 146 (Asp-146) interacts with Mg(2+). Thiamine diphosphate contacts are provided by residues 147 to 148, Asn-175, Tyr-285, and Glu-365; that span reads GA. Asn-175 is a binding site for Mg(2+).

It belongs to the transketolase family. DXPS subfamily. In terms of assembly, homodimer. Mg(2+) is required as a cofactor. Thiamine diphosphate serves as cofactor.

The catalysed reaction is D-glyceraldehyde 3-phosphate + pyruvate + H(+) = 1-deoxy-D-xylulose 5-phosphate + CO2. It participates in metabolic intermediate biosynthesis; 1-deoxy-D-xylulose 5-phosphate biosynthesis; 1-deoxy-D-xylulose 5-phosphate from D-glyceraldehyde 3-phosphate and pyruvate: step 1/1. Its function is as follows. Catalyzes the acyloin condensation reaction between C atoms 2 and 3 of pyruvate and glyceraldehyde 3-phosphate to yield 1-deoxy-D-xylulose-5-phosphate (DXP). In Clostridium perfringens (strain SM101 / Type A), this protein is 1-deoxy-D-xylulose-5-phosphate synthase.